The sequence spans 685 residues: uncharacterized protein (685 aa).

Disordered stretches follow at residues 78–220 (AKQA…HIFD), 251–280 (TQNPVPPPPAPPLTNNQGENNIPTDNRNNE), 296–332 (DNNNNNNNNNNNLGSAMNTPMNNMNKGGPRNNVNNSE), and 459–657 (RNVK…NNKS). Residues 86-139 (KKKETENVEEEGEEKEKKIDDESFPDLLESTEKMKSELSKEKDKKKKQLKDGKK) are a coiled coil. 2 stretches are compositionally biased toward basic and acidic residues: residues 115–127 (STEKMKSELSKEK) and 165–181 (FNDKKKYNMYDGNKKND). Low complexity predominate over residues 190–215 (NNQQNDMNNNNQNNQNNMNNNNNNNN). The segment covering 263-276 (LTNNQGENNIPTDN) has biased composition (polar residues). The span at 297–307 (NNNNNNNNNNN) shows a compositional bias: low complexity. Residues 308–331 (LGSAMNTPMNNMNKGGPRNNVNNS) are compositionally biased toward polar residues. Composition is skewed to low complexity over residues 460 to 474 (NVKNLGQNNNEGNTN) and 481 to 498 (NNRGQGNNNNNNNNNNFN). Positions 499-515 (RRNDKNDNRNFRRKDID) are enriched in basic and acidic residues. A compositionally biased stretch (polar residues) spans 520–530 (WRNTANPTQEE). Positions 531–590 (NNNNMNHNNNYNNNNNNNNNNNNNNNNNNNTNHGKNFRNFNNLNNMKNNNSSNNKMMGMN) are enriched in low complexity. A compositionally biased stretch (polar residues) spans 591–602 (HMQQKGMNSSTG). A compositionally biased stretch (low complexity) spans 617 to 656 (NNKMYKNNMGNANNNNNNNAVNTNFNNNNNNGNFHMNNNK).

This is an uncharacterized protein from Plasmodium falciparum (isolate 3D7).